The following is a 155-amino-acid chain: Small ribosomal subunit protein uS7 (155 aa).

This sequence belongs to the universal ribosomal protein uS7 family. Part of the 30S ribosomal subunit. Contacts proteins S9 and S11.

One of the primary rRNA binding proteins, it binds directly to 16S rRNA where it nucleates assembly of the head domain of the 30S subunit. Is located at the subunit interface close to the decoding center, probably blocks exit of the E-site tRNA. The protein is Small ribosomal subunit protein uS7 of Chloroherpeton thalassium (strain ATCC 35110 / GB-78).